A 277-amino-acid chain; its full sequence is MGILLDGKPVAKMIYAEIKEWLGNLQEKPPKLVLFCSEPDDSTKTYMNSIVKRGGKLGISVEICHAGENPVEEIKKLNESRDVAGVMIMHPLKNVDEKLVVSALSLEKDVEGRTPGNLGGIMTGDESFAPPTAEAVMEILRFYDVSLSGKDVTIVGRSTTVGKPLSMLMLKKGIDATVTICHSRTKNLVEKIKRANVLVSAVGRAGFITKEMVGKDSIIIDVGINLYDGKIVGDVDFEQVEPEVAAITPVPGGVGIVTTAILFRHFMVSSRRMVGRR.

Residues 156 to 158 (GRS), S183, and I224 contribute to the NADP(+) site.

Belongs to the tetrahydrofolate dehydrogenase/cyclohydrolase family. Homodimer.

The catalysed reaction is (6R)-5,10-methylene-5,6,7,8-tetrahydrofolate + NADP(+) = (6R)-5,10-methenyltetrahydrofolate + NADPH. It carries out the reaction (6R)-5,10-methenyltetrahydrofolate + H2O = (6R)-10-formyltetrahydrofolate + H(+). It functions in the pathway one-carbon metabolism; tetrahydrofolate interconversion. Functionally, catalyzes the oxidation of 5,10-methylenetetrahydrofolate to 5,10-methenyltetrahydrofolate and then the hydrolysis of 5,10-methenyltetrahydrofolate to 10-formyltetrahydrofolate. This is Bifunctional protein FolD from Kosmotoga olearia (strain ATCC BAA-1733 / DSM 21960 / TBF 19.5.1).